Reading from the N-terminus, the 1591-residue chain is Dicer-like protein 1 (1591 aa).

Composition is skewed to basic and acidic residues over residues 1–20 (MEVH…RYDD) and 41–52 (SKPRKISERKRA). The segment at 1-52 (MEVHDGLKSPDKAAKSRYDDDRIDQDSEDEAVRLVANPDPSKPRKISERKRA) is disordered. Positions 115–298 (LFERAKQKNT…SYERATHELE (184 aa)) constitute a Helicase ATP-binding domain. ATP is bound at residue 128 to 135 (LDTGTGKT). The short motif at 242–245 (DEAH) is the DEAH box element. A Helicase C-terminal domain is found at 439–607 (KLIEILAECF…CLSLPKDRIM (169 aa)). Positions 639-729 (SLVVLAEFVA…KSTLAKVLPA (91 aa)) constitute a Dicer dsRNA-binding fold domain. The 125-residue stretch at 888–1012 (TTTDRVPYNF…LVLETLLISQ (125 aa)) folds into the PAZ domain. RNase III domains are found at residues 1050 to 1190 (IDIA…LTAQ) and 1243 to 1406 (CSQI…VDTG). Residues E1283, D1392, and E1395 each contribute to the Mg(2+) site. Positions 1440-1514 (THITSIITTQ…AKQAVAIYED (75 aa)) constitute a DRBM domain. Zn(2+) is bound by residues C1452, H1485, C1526, and C1528.

Belongs to the helicase family. Dicer subfamily. The cofactor is Mg(2+). It depends on Mn(2+) as a cofactor.

Its function is as follows. Dicer-like endonuclease which seems not to be involved in cleaving double-stranded RNA in the RNA interference (RNAi) pathway, contrary to its DCL2 counterpart. The sequence is that of Dicer-like protein 1 (DCL1) from Pyricularia oryzae (strain 70-15 / ATCC MYA-4617 / FGSC 8958) (Rice blast fungus).